A 490-amino-acid chain; its full sequence is Histone-lysine N-methyltransferase, H3 lysine-9 specific (490 aa).

Positions 8–69 (YEVERIVDEK…RKRRLKGSNS (62 aa)) constitute a Chromo domain. 2 disordered regions span residues 61–133 (KRRL…TALT) and 150–190 (KKLG…KPRN). Basic and acidic residues predominate over residues 102–114 (FSRELNVKKENKK). The segment covering 115–133 (VFSSQTTKRQSRKQSTALT) has biased composition (polar residues). N6,N6,N6-trimethyllysine; alternate is present on Lys-127. The residue at position 127 (Lys-127) is an N6-methyllysine; alternate. A compositionally biased stretch (basic and acidic residues) spans 155-168 (TRNEVKEESQKREL). Residues 169–185 (VSNSIKEATSPKTSSIL) are compositionally biased toward polar residues. A Pre-SET domain is found at 258 to 325 (SGCNCSSLGG…ECPNRVVQRG (68 aa)). Zn(2+) is bound by residues Cys-260, Cys-262, Cys-268, Cys-276, Cys-278, Cys-307, Cys-311, Cys-313, and Cys-317. One can recognise an SET domain in the interval 328-452 (LPLEIFKTKE…PLEELTFDYA (125 aa)). S-adenosyl-L-methionine is bound by residues 338-340 (KGW), Tyr-381, Arg-406, and 407-410 (FFNH). Cys-412 contacts Zn(2+). The autoregulatory loop stretch occupies residues 453-472 (GAKDFSPVQSQKSQQNRISK). Lys-455 is subject to N6,N6,N6-trimethyllysine; by autocatalysis; alternate. An N6,N6-dimethyllysine; by autocatalysis; alternate modification is found at Lys-455. Residue Lys-455 is modified to N6-methyllysine; by autocatalysis; alternate. Position 464 is an N6-methyllysine (Lys-464). The region spanning 473–489 (LRRQCKCGSANCRGWLF) is the Post-SET domain. Zn(2+) contacts are provided by Cys-477, Cys-479, and Cys-484. 477-478 (CK) contacts S-adenosyl-L-methionine.

It belongs to the class V-like SAM-binding methyltransferase superfamily. Histone-lysine methyltransferase family. Suvar3-9 subfamily. Component of the Clr4 methyltransferase complex (ClrC) composed of at least clr4, rik1, pcu4, rbx1, raf1 and raf2. The cullin pcu4, rik1, raf1, raf2 and the ring-box protein rbx1 are components of an E3 ubiquitin ligase, whose activity is essential for heterochromatin assembly. Interacts directly with pcu4. Interacts with mlo3. Post-translationally, autocatalytic methylation of specific lysine residues in an internal loop (autoregulatory loop) promote a conformational switch that enhances the H3K9me activity of clr4.

Its subcellular location is the nucleus. It is found in the cytoplasm. The protein localises to the cytoskeleton. It localises to the microtubule organizing center. The protein resides in the spindle pole body. Its subcellular location is the chromosome. It carries out the reaction L-lysyl(9)-[histone H3] + 3 S-adenosyl-L-methionine = N(6),N(6),N(6)-trimethyl-L-lysyl(9)-[histone H3] + 3 S-adenosyl-L-homocysteine + 3 H(+). The catalysed reaction is N(6)-methyl-L-lysyl(9)-[histone H3] + S-adenosyl-L-methionine = N(6),N(6)-dimethyl-L-lysyl(9)-[histone H3] + S-adenosyl-L-homocysteine + H(+). It catalyses the reaction N(6),N(6)-dimethyl-L-lysyl(9)-[histone H3] + S-adenosyl-L-methionine = N(6),N(6),N(6)-trimethyl-L-lysyl(9)-[histone H3] + S-adenosyl-L-homocysteine + H(+). The enzyme catalyses L-lysyl-[protein] + S-adenosyl-L-methionine = N(6)-methyl-L-lysyl-[protein] + S-adenosyl-L-homocysteine + H(+). It carries out the reaction N(6)-methyl-L-lysyl-[protein] + S-adenosyl-L-methionine = N(6),N(6)-dimethyl-L-lysyl-[protein] + S-adenosyl-L-homocysteine + H(+). The catalysed reaction is N(6),N(6)-dimethyl-L-lysyl-[protein] + S-adenosyl-L-methionine = N(6),N(6),N(6)-trimethyl-L-lysyl-[protein] + S-adenosyl-L-homocysteine + H(+). It catalyses the reaction L-lysyl(9)-[histone H3] + S-adenosyl-L-methionine = N(6)-methyl-L-lysyl(9)-[histone H3] + S-adenosyl-L-homocysteine + H(+). An internal loop (autoregulatory loop) inhibits the catalytic activity of the enzyme by blocking the histone H3K9 substrate-binding pocket. Autocatalytic methylation of specific lysine residues in this loop promote a conformational switch that enhances the H3K9me activity of clr4. Functionally, histone methyltransferase which contributes to the establishment of heterochromatin by specifically methylating histone H3 to form H3K9me. Part of the Clr4 methyltransferase complex (ClrC). ClrC preferentially ubiquitylates H3K14 and ClrC-mediated H3 ubiquitination promotes clr4 methyltransferase activity. Clr4 functions as a reader and writer of H3K9 methylation. It sets the H3K9me mark and afterwards this H3K9me mark is recognized by the chromodomains of clr4 and swi6/HP1, which then recruit additional clr4 leading to the methylation of neighboring nucleosomes. H3K9me represents a specific tag for epigenetic transcriptional repression by recruiting swi6/HP1 to methylated histones which leads to transcriptional silencing within centromeric heterochromatin, telomeres, ribosomal DNA repeats, and the silent mating-type region. Clr4 methyltransferase activity promotes the assembly of a tripartite complex composed of ClrC and complexes involved in siRNA generation. Apart from H3K9, also methylates non-histone proteins such as mlo3. Interacts with mlo3 to promote the processing of centromeric and antisense RNAs. This Schizosaccharomyces pombe (strain 972 / ATCC 24843) (Fission yeast) protein is Histone-lysine N-methyltransferase, H3 lysine-9 specific (clr4).